Here is a 318-residue protein sequence, read N- to C-terminus: tRNA pseudouridine synthase B (318 aa).

The active-site Nucleophile is the aspartate 54.

It belongs to the pseudouridine synthase TruB family. Type 1 subfamily.

The enzyme catalyses uridine(55) in tRNA = pseudouridine(55) in tRNA. In terms of biological role, responsible for synthesis of pseudouridine from uracil-55 in the psi GC loop of transfer RNAs. This is tRNA pseudouridine synthase B from Ralstonia pickettii (strain 12J).